The chain runs to 323 residues: ATP synthase gamma chain (323 aa).

This sequence belongs to the ATPase gamma chain family. In terms of assembly, F-type ATPases have 2 components, CF(1) - the catalytic core - and CF(0) - the membrane proton channel. CF(1) has five subunits: alpha(3), beta(3), gamma(1), delta(1), epsilon(1). CF(0) has three main subunits: a, b and c.

It localises to the cell inner membrane. Produces ATP from ADP in the presence of a proton gradient across the membrane. The gamma chain is believed to be important in regulating ATPase activity and the flow of protons through the CF(0) complex. This is ATP synthase gamma chain from Rickettsia rickettsii (strain Iowa).